The chain runs to 158 residues: Kelch repeat protein B10 (158 aa).

Kelch repeat units follow at residues 25 to 76 (TIFV…STFG) and 77 to 129 (MLYF…KLNN).

The protein belongs to the poxviruses Kelch family.

The sequence is that of Kelch repeat protein B10 from Vaccinia virus (strain Ankara) (VACV).